Here is a 108-residue protein sequence, read N- to C-terminus: uncharacterized protein (108 aa).

An N-linked (GlcNAc...) asparagine glycan is attached at N33.

In terms of processing, N-glycosylated.

This is an uncharacterized protein from Saccharomyces cerevisiae (strain ATCC 204508 / S288c) (Baker's yeast).